A 444-amino-acid polypeptide reads, in one-letter code: Zinc protease PqqE (444 aa).

The signal sequence occupies residues 1–28; sequence MKHFSVKRLLGLSSVLLVTLGASMHAQS. Zn(2+) is bound at residue His-78. The active-site Proton acceptor is the Glu-81. 2 residues coordinate Zn(2+): His-82 and Glu-158.

It belongs to the peptidase M16 family. Zn(2+) is required as a cofactor.

The protein resides in the secreted. Its activity is regulated as follows. Can function alone, but full activity requires the presence of the non-peptidase homolog YmxG. Virulence factor that cleaves the cytoplasmic domain of the human junctional adhesion molecule A (JAM-A), compromising gastric epithelial barrier function and cell-cell adhesion. Cleavage of JAM-A occurs after Ala-285 or, to a lesser extent, before Ala-285. This is Zinc protease PqqE from Helicobacter pylori (strain ATCC 700392 / 26695) (Campylobacter pylori).